Here is a 612-residue protein sequence, read N- to C-terminus: Adherence factor (612 aa).

Low complexity-rich tracts occupy residues 1–18 (MSSF…NLSS), 47–68 (SSMM…QQQQ), 94–106 (LQTQ…SATT), 115–141 (YNQQ…NNMQ), 182–203 (QSAQ…QPRS), and 218–228 (SRQVSGSGRST). 7 disordered regions span residues 1–20 (MSSF…SSFQ), 46–68 (ASSM…QQQQ), 94–143 (LQTQ…MQFF), 179–273 (PQLQ…NNNK), 443–480 (KEKK…NTNN), 497–527 (SQLM…LSNN), and 546–612 (SQEQ…KQFY). The segment covering 230–240 (AKKQSAITSGS) has biased composition (polar residues). The span at 254–272 (TSVANSTSTTTMTTTNNNN) shows a compositional bias: low complexity. The span at 443 to 457 (KEKKLTEKTIEQREQ) shows a compositional bias: basic and acidic residues. 2 stretches are compositionally biased toward polar residues: residues 465 to 480 (ANHS…NTNN) and 497 to 512 (SQLM…ATKI). Residues 555–571 (NQHHHNHQQHPLIHHHQ) are compositionally biased toward basic residues. Over residues 585–606 (PSTIPTSSLSIQQQQQQQQQQL) the composition is skewed to low complexity.

In terms of biological role, surface antigen mediating adhesion and aggregation in S.cerevisiae. The chain is Adherence factor (ADF1) from Candida albicans (strain SC5314 / ATCC MYA-2876) (Yeast).